The following is a 499-amino-acid chain: Anaerobic magnesium-protoporphyrin IX monomethyl ester cyclase (499 aa).

The region spanning Pro-9 to Asn-145 is the B12-binding domain. The Radical SAM core domain maps to Tyr-188–Lys-420. Residues Cys-202, Cys-206, and Cys-209 each coordinate [4Fe-4S] cluster.

Belongs to the BchE family. It depends on [4Fe-4S] cluster as a cofactor. The cofactor is adenosylcob(III)alamin.

The catalysed reaction is Mg-protoporphyrin IX 13-monomethyl ester + 3 S-adenosyl-L-methionine + H2O = 3,8-divinyl protochlorophyllide a + 3 5'-deoxyadenosine + 3 L-methionine + 4 H(+). It participates in porphyrin-containing compound metabolism; bacteriochlorophyll biosynthesis (light-independent). In terms of biological role, involved in the tetrapyrrole biosynthetic pathways leading to chlorophyll and bacteriochlorophyll (BChl). Catalyzes the anaerobic formation of the isocyclic ring (E-ring) in Mg-protoporphyrin monomethyl ester (MPE) to yield protochlorophyllide a (PChlide a) via a six-electron oxidation and the formation of an oxo group at position C13 using oxygen from a water molecule. The chain is Anaerobic magnesium-protoporphyrin IX monomethyl ester cyclase from Synechocystis sp. (strain ATCC 27184 / PCC 6803 / Kazusa).